The chain runs to 65 residues: Small hydrophobic protein (65 aa).

At 1–20 the chain is on the intravirion side; that stretch reads MGNTSITIEFTSKFWPYFTL. The segment at 6–15 is interaction with host BCAP31; the sequence is ITIEFTSKFW. Residues 21–44 form a helical; Signal-anchor for type II membrane protein membrane-spanning segment; the sequence is IHMILTPISLLIIITIMIAILNKL. The interaction with small-molecule inhibitor stretch occupies residues 38 to 43; it reads IAILNK. Residues 45–65 are Virion surface-facing; it reads SEHKTFCNKTLELGQMYQINT. An N-linked (GlcNAc...) asparagine; by host glycan is attached at Asn52.

It belongs to the orthopneumovirus small hydrophobic protein family. As to quaternary structure, homopentamer forming a funnel-like pore. Interacts with glycoprotein G; this interaction occurs on the surface of virion particles and infected cells. Interacts with host BCAP31 (via C-terminus); this interaction is direct. In terms of processing, four species of SH have been detected in infected cell cytoplasm: a 7.5 kDa non-glycosylated form (SH0), a 13-15 kDa form that contains one or two N-linked carbohydrate side chains of the high-mannose type (SHg), a 21-30 kDa polylactosaminoglycan-modified form of the protein (SHp), and the isoform generated by alternative translational initiation. Of these different forms, SH0 is by far the most abundant protein detected during virus infection. Post-translationally, tyrosine phosphorylated.

The protein resides in the virion membrane. Its subcellular location is the host cell membrane. It is found in the host Golgi apparatus membrane. The protein localises to the host endoplasmic reticulum membrane. With respect to regulation, channel activity is inhibited by copper. Also inhibited by small-molecule pyronin B. Functionally, viroporin that forms a homopentameric ion channel displaying low ion selectivity. May play a role in virus morphogenesis and pathogenicity at various stages of the viral life cycle. Accumulates at the membrane of the Golgi apparatus in infected cells and may facilitate virus release by modifying the secretory pathway. May enhance host membrane permeability and disrupt cellular ion homeostasis, which can be sensed as damage-associated molecular patterns/danger signals, triggering NLRP3 inflammasome activation and inflammatory immune response. Also inhibits host TNFA-mediated signaling pathway and may delay apoptosis, allowing time for the virus to replicate. This chain is Small hydrophobic protein, found in Human respiratory syncytial virus B (strain 18537).